Reading from the N-terminus, the 106-residue chain is L-rhamnose mutarotase (106 aa).

Residue Y20 participates in substrate binding. The Proton donor role is filled by H24. Substrate-binding positions include Y43 and 78–79 (WW).

Belongs to the rhamnose mutarotase family. In terms of assembly, homodimer.

The protein localises to the cytoplasm. The catalysed reaction is alpha-L-rhamnose = beta-L-rhamnose. The protein operates within carbohydrate metabolism; L-rhamnose metabolism. Involved in the anomeric conversion of L-rhamnose. The chain is L-rhamnose mutarotase from Leptothrix cholodnii (strain ATCC 51168 / LMG 8142 / SP-6) (Leptothrix discophora (strain SP-6)).